Consider the following 430-residue polypeptide: Tektin-2 (430 aa).

Coiled coils occupy residues 75–162 and 226–380; these read KEML…FQHL and KNRA…IACK.

This sequence belongs to the tektin family. Microtubule inner protein component of sperm flagellar doublet microtubules. May interact with CCDC172. Tyrosine phosphorylated. Post-translationally, ubiquitinated, leading to its degradation. Deubiquitinated by USP16, promoting its stability.

The protein localises to the cytoplasm. Its subcellular location is the cytoskeleton. It is found in the cilium axoneme. The protein resides in the flagellum axoneme. It localises to the microtubule organizing center. Its function is as follows. Microtubule inner protein (MIP) part of the dynein-decorated doublet microtubules (DMTs) in cilia and flagellar axoneme. Plays a key role in the assembly or attachment of the inner dynein arm to microtubules in sperm flagella and tracheal cilia. Forms filamentous polymers in the walls of ciliary and flagellar microtubules. This Rattus norvegicus (Rat) protein is Tektin-2 (Tekt2).